Here is a 207-residue protein sequence, read N- to C-terminus: Guanylate kinase (207 aa).

A Guanylate kinase-like domain is found at 6–185 (GLLIVLSGPS…AKNRIQCIVE (180 aa)). 13–20 (GPSGVGKG) lines the ATP pocket.

This sequence belongs to the guanylate kinase family.

It localises to the cytoplasm. It carries out the reaction GMP + ATP = GDP + ADP. Functionally, essential for recycling GMP and indirectly, cGMP. This is Guanylate kinase from Staphylococcus aureus (strain Mu50 / ATCC 700699).